Consider the following 132-residue polypeptide: Small ribosomal subunit protein uS11 (132 aa).

The protein belongs to the universal ribosomal protein uS11 family. Part of the 30S ribosomal subunit. Interacts with proteins S7 and S18. Binds to IF-3.

Its function is as follows. Located on the platform of the 30S subunit, it bridges several disparate RNA helices of the 16S rRNA. Forms part of the Shine-Dalgarno cleft in the 70S ribosome. This Cyanothece sp. (strain PCC 7425 / ATCC 29141) protein is Small ribosomal subunit protein uS11.